The sequence spans 479 residues: ATP synthase subunit beta (479 aa).

160–167 (GGAGVGKT) is an ATP binding site.

The protein belongs to the ATPase alpha/beta chains family. F-type ATPases have 2 components, CF(1) - the catalytic core - and CF(0) - the membrane proton channel. CF(1) has five subunits: alpha(3), beta(3), gamma(1), delta(1), epsilon(1). CF(0) has three main subunits: a(1), b(2) and c(9-12). The alpha and beta chains form an alternating ring which encloses part of the gamma chain. CF(1) is attached to CF(0) by a central stalk formed by the gamma and epsilon chains, while a peripheral stalk is formed by the delta and b chains.

The protein resides in the cell inner membrane. It catalyses the reaction ATP + H2O + 4 H(+)(in) = ADP + phosphate + 5 H(+)(out). Functionally, produces ATP from ADP in the presence of a proton gradient across the membrane. The catalytic sites are hosted primarily by the beta subunits. This Anaplasma phagocytophilum (strain HZ) protein is ATP synthase subunit beta.